Here is a 171-residue protein sequence, read N- to C-terminus: Lipoprotein signal peptidase (171 aa).

3 helical membrane passes run 7–27 (GLIALLATLALDQASKLWLYF), 64–84 (LGRWLLVAVSLAAVIGLSVWM), and 88–108 (GSRLLAVALGLIVGGALGNAI). Catalysis depends on residues Asp-118 and Asp-136. The chain crosses the membrane as a helical span at residues 128–148 (SWYVFNVADAAIVAGVVGLIL).

The protein belongs to the peptidase A8 family.

It is found in the cell inner membrane. It catalyses the reaction Release of signal peptides from bacterial membrane prolipoproteins. Hydrolyzes -Xaa-Yaa-Zaa-|-(S,diacylglyceryl)Cys-, in which Xaa is hydrophobic (preferably Leu), and Yaa (Ala or Ser) and Zaa (Gly or Ala) have small, neutral side chains.. Its pathway is protein modification; lipoprotein biosynthesis (signal peptide cleavage). In terms of biological role, this protein specifically catalyzes the removal of signal peptides from prolipoproteins. This Methylorubrum extorquens (strain PA1) (Methylobacterium extorquens) protein is Lipoprotein signal peptidase.